A 293-amino-acid polypeptide reads, in one-letter code: NAD kinase (293 aa).

D74 serves as the catalytic Proton acceptor. Residues 74 to 75, 148 to 149, H159, R176, D178, T186, 189 to 194, and Q248 contribute to the NAD(+) site; these read DG, NE, and TAYSLS.

Belongs to the NAD kinase family. As to quaternary structure, homodimer. A divalent metal cation is required as a cofactor.

It is found in the cytoplasm. The enzyme catalyses NAD(+) + ATP = ADP + NADP(+) + H(+). Involved in the regulation of the intracellular balance of NAD and NADP, and is a key enzyme in the biosynthesis of NADP. Catalyzes specifically the phosphorylation on 2'-hydroxyl of the adenosine moiety of NAD to yield NADP. This is NAD kinase from Yersinia pestis.